The sequence spans 118 residues: Large ribosomal subunit protein bL20 (118 aa).

The protein belongs to the bacterial ribosomal protein bL20 family.

In terms of biological role, binds directly to 23S ribosomal RNA and is necessary for the in vitro assembly process of the 50S ribosomal subunit. It is not involved in the protein synthesizing functions of that subunit. In Clostridioides difficile (strain 630) (Peptoclostridium difficile), this protein is Large ribosomal subunit protein bL20.